Here is a 159-residue protein sequence, read N- to C-terminus: Neurotrophin-3 (159 aa).

A signal peptide spans 1 to 3 (IQS). Residues 4–115 (TSMDQGILTE…VQNRTSRRKR (112 aa)) constitute a propeptide that is removed on maturation. Residues 91–129 (APLEPPPLYLTEEPLVQNRTSRRKREGKRHRGEYSVCDS) are disordered. An N-linked (GlcNAc...) asparagine glycan is attached at asparagine 108. Over residues 110-121 (TSRRKREGKRHR) the composition is skewed to basic residues.

It belongs to the NGF-beta family.

Its subcellular location is the secreted. Seems to promote the survival of visceral and proprioceptive sensory neurons. In Candoia carinata (Papuan tree boa), this protein is Neurotrophin-3 (NTF3).